We begin with the raw amino-acid sequence, 300 residues long: Ribonuclease HIII (300 aa).

The region spanning 83-300 (IPIIGSDEVG…THKAQALLTK (218 aa)) is the RNase H type-2 domain. The a divalent metal cation site is built by Asp89, Glu90, and Asp194.

The protein belongs to the RNase HII family. RnhC subfamily. The cofactor is Mn(2+). Mg(2+) is required as a cofactor.

Its subcellular location is the cytoplasm. The enzyme catalyses Endonucleolytic cleavage to 5'-phosphomonoester.. Endonuclease that specifically degrades the RNA of RNA-DNA hybrids. The sequence is that of Ribonuclease HIII from Streptococcus pyogenes serotype M4 (strain MGAS10750).